The primary structure comprises 230 residues: Sugar fermentation stimulation protein homolog (230 aa).

The protein belongs to the SfsA family.

The polypeptide is Sugar fermentation stimulation protein homolog (Clostridium perfringens (strain ATCC 13124 / DSM 756 / JCM 1290 / NCIMB 6125 / NCTC 8237 / Type A)).